The primary structure comprises 426 residues: Histidine--tRNA ligase (426 aa).

Belongs to the class-II aminoacyl-tRNA synthetase family. In terms of assembly, homodimer.

It localises to the cytoplasm. It carries out the reaction tRNA(His) + L-histidine + ATP = L-histidyl-tRNA(His) + AMP + diphosphate + H(+). This is Histidine--tRNA ligase from Pseudoalteromonas atlantica (strain T6c / ATCC BAA-1087).